Reading from the N-terminus, the 242-residue chain is ATP synthase subunit a (242 aa).

Helical transmembrane passes span 28 to 48, 89 to 109, 128 to 148, 193 to 213, and 214 to 234; these read LHGQVFLSSWVVIGLLLLLVV, LPFVGTLFLFIFVCNWGGALI, INTTVAMALLVSLSYFYAGLS, LVVAVLAFLVPVLVPLPAMFL, and GLFTSAIQALIFATLAANYIG.

This sequence belongs to the ATPase A chain family. F-type ATPases have 2 components, CF(1) - the catalytic core - and CF(0) - the membrane proton channel. CF(1) has five subunits: alpha(3), beta(3), gamma(1), delta(1), epsilon(1). CF(0) has four main subunits: a, b, b' and c.

It is found in the cellular thylakoid membrane. Functionally, key component of the proton channel; it plays a direct role in the translocation of protons across the membrane. The polypeptide is ATP synthase subunit a (Synechococcus sp. (strain WH7803)).